Reading from the N-terminus, the 340-residue chain is Protein jhp_1168 (340 aa).

In terms of assembly, seems to interact with H.pylori HolB.

Could be the functional equivalent of DNA polymerase III delta subunit (HolA). In Helicobacter pylori (strain J99 / ATCC 700824) (Campylobacter pylori J99), this protein is Protein jhp_1168.